The sequence spans 566 residues: NAD-dependent malic enzyme (566 aa).

Residue Tyr-104 is the Proton donor of the active site. Arg-157 provides a ligand contact to NAD(+). Lys-175 serves as the catalytic Proton acceptor. 3 residues coordinate a divalent metal cation: Glu-246, Asp-247, and Asp-270. Positions 270 and 419 each coordinate NAD(+).

Belongs to the malic enzymes family. In terms of assembly, homotetramer. Mg(2+) serves as cofactor. Requires Mn(2+) as cofactor.

The catalysed reaction is (S)-malate + NAD(+) = pyruvate + CO2 + NADH. The enzyme catalyses oxaloacetate + H(+) = pyruvate + CO2. The chain is NAD-dependent malic enzyme from Cronobacter sakazakii (strain ATCC BAA-894) (Enterobacter sakazakii).